Reading from the N-terminus, the 247-residue chain is E3 SUMO-protein ligase NSE2 (247 aa).

M1 is subject to N-acetylmethionine. Residues K90 and K107 each participate in a glycyl lysine isopeptide (Lys-Gly) (interchain with G-Cter in SUMO2) cross-link. S116 bears the Phosphoserine mark. Glycyl lysine isopeptide (Lys-Gly) (interchain with G-Cter in SUMO2) cross-links involve residues K125 and K130. An SP-RING-type zinc finger spans residues 154 to 240; the sequence is MDEDMIVTQS…LRRAIESHNK (87 aa). C185, H187, C210, and C215 together coordinate Zn(2+).

Belongs to the NSE2 family. Component of the SMC5-SMC6 complex which consists at least of SMC5, SMC6, NSMCE2, NSMCE1, NSMCE4A or EID3 and NSMCE3. Sumoylated, possibly via autosumoylation.

The protein resides in the nucleus. It localises to the chromosome. Its subcellular location is the telomere. It is found in the PML body. Its pathway is protein modification; protein sumoylation. Functionally, E3 SUMO-protein ligase component of the SMC5-SMC6 complex, a complex involved in DNA double-strand break repair by homologous recombination. Is not be required for the stability of the complex. The complex may promote sister chromatid homologous recombination by recruiting the SMC1-SMC3 cohesin complex to double-strand breaks. Acts as an E3 ligase mediating SUMO attachment to various proteins such as SMC6L1 and TSNAX, the shelterin complex subunits TERF1, TERF2, TINF2 and TERF2IP, RAD51AP1, and maybe the cohesin components RAD21 and STAG2. Required for recruitment of telomeres to PML nuclear bodies. Required for sister chromatid cohesion during prometaphase and mitotic progression. In Rattus norvegicus (Rat), this protein is E3 SUMO-protein ligase NSE2 (Nsmce2).